Reading from the N-terminus, the 421-residue chain is Putative transporter AmpG 3 (421 aa).

A run of 12 helical transmembrane segments spans residues 6-26, 41-61, 80-100, 104-124, 139-159, 166-186, 230-250, 274-294, 297-317, 324-344, 360-380, and 388-408; these read YLIG…LIFF, IIGA…WSPF, WALV…KRSP, LCIT…QDIV, LSIV…LGSV, IIFG…VGPI, LLLI…PMAM, LLIM…IGIF, VLIG…LATI, FIIT…IISI, AISA…GGIC, and VFFL…YTIY.

Belongs to the major facilitator superfamily.

Its subcellular location is the cell inner membrane. In Rickettsia prowazekii (strain Madrid E), this protein is Putative transporter AmpG 3 (ampG3).